Here is a 76-residue protein sequence, read N- to C-terminus: Cytochrome c oxidase subunit 6C-1 (76 aa).

Residues 2–10 (SLAKPAMRG) are Mitochondrial matrix-facing. The helical transmembrane segment at 11-51 (LLGKRLRFHLPIAFTLSLVAALGFKYGVTEPRKQAYADFYK) threads the bilayer. The Mitochondrial intermembrane portion of the chain corresponds to 52 to 76 (QYDAVKDFNAMREAGIFESVRPSGE).

Belongs to the cytochrome c oxidase subunit 6c family. Component of the cytochrome c oxidase (complex IV, CIV), a multisubunit enzyme composed of 14 subunits. The complex is composed of a catalytic core of 3 subunits MT-CO1, MT-CO2 and MT-CO3, encoded in the mitochondrial DNA, and 11 supernumerary subunits COX4I, COX5A, COX5B, COX6A, COX6B, COX6C, COX7A, COX7B, COX7C, COX8 and NDUFA4, which are encoded in the nuclear genome. The complex exists as a monomer or a dimer and forms supercomplexes (SCs) in the inner mitochondrial membrane with NADH-ubiquinone oxidoreductase (complex I, CI) and ubiquinol-cytochrome c oxidoreductase (cytochrome b-c1 complex, complex III, CIII), resulting in different assemblies (supercomplex SCI(1)III(2)IV(1) and megacomplex MCI(2)III(2)IV(2)).

The protein localises to the mitochondrion inner membrane. It participates in energy metabolism; oxidative phosphorylation. In terms of biological role, component of the cytochrome c oxidase, the last enzyme in the mitochondrial electron transport chain which drives oxidative phosphorylation. The respiratory chain contains 3 multisubunit complexes succinate dehydrogenase (complex II, CII), ubiquinol-cytochrome c oxidoreductase (cytochrome b-c1 complex, complex III, CIII) and cytochrome c oxidase (complex IV, CIV), that cooperate to transfer electrons derived from NADH and succinate to molecular oxygen, creating an electrochemical gradient over the inner membrane that drives transmembrane transport and the ATP synthase. Cytochrome c oxidase is the component of the respiratory chain that catalyzes the reduction of oxygen to water. Electrons originating from reduced cytochrome c in the intermembrane space (IMS) are transferred via the dinuclear copper A center (CU(A)) of subunit 2 and heme A of subunit 1 to the active site in subunit 1, a binuclear center (BNC) formed by heme A3 and copper B (CU(B)). The BNC reduces molecular oxygen to 2 water molecules using 4 electrons from cytochrome c in the IMS and 4 protons from the mitochondrial matrix. This chain is Cytochrome c oxidase subunit 6C-1, found in Thunnus obesus (Bigeye tuna).